The chain runs to 167 residues: Large ribosomal subunit protein uL15 (167 aa).

Positions 1–10 (MKLNQISDNP) are enriched in polar residues. The disordered stretch occupies residues 1–37 (MKLNQISDNPGATKDRMRVGRGIGSGKGKTAGRGVKG). The segment covering 21–35 (RGIGSGKGKTAGRGV) has biased composition (gly residues).

Belongs to the universal ribosomal protein uL15 family. Part of the 50S ribosomal subunit.

Its function is as follows. Binds to the 23S rRNA. The protein is Large ribosomal subunit protein uL15 of Methylobacterium radiotolerans (strain ATCC 27329 / DSM 1819 / JCM 2831 / NBRC 15690 / NCIMB 10815 / 0-1).